The following is a 606-amino-acid chain: (R)-limonene synthase 1, chloroplastic (606 aa).

The N-terminal 32 residues, 1–32 (MSSCINPSTLVTSVNAFKCLPLATNKAAIRIM), are a transit peptide targeting the chloroplast. Residues Asp-342 and Asp-346 each contribute to the Mn(2+) site. Substrate is bound by residues Asp-342, Asp-346, Arg-484, Asp-487, and Lys-503. Residues 342 to 346 (DDIYD) carry the DDXXD motif motif. Asp-487 provides a ligand contact to Mn(2+).

It belongs to the terpene synthase family. Requires Mg(2+) as cofactor. The cofactor is Mn(2+).

The protein localises to the plastid. Its subcellular location is the chloroplast. It catalyses the reaction (2E)-geranyl diphosphate = (4R)-limonene + diphosphate. The polypeptide is (R)-limonene synthase 1, chloroplastic (Citrus limon (Lemon)).